A 121-amino-acid polypeptide reads, in one-letter code: Ribosome-binding factor A (121 aa).

The protein belongs to the RbfA family. Monomer. Binds 30S ribosomal subunits, but not 50S ribosomal subunits or 70S ribosomes.

The protein localises to the cytoplasm. Its function is as follows. One of several proteins that assist in the late maturation steps of the functional core of the 30S ribosomal subunit. Associates with free 30S ribosomal subunits (but not with 30S subunits that are part of 70S ribosomes or polysomes). Required for efficient processing of 16S rRNA. May interact with the 5'-terminal helix region of 16S rRNA. In Oenococcus oeni (strain ATCC BAA-331 / PSU-1), this protein is Ribosome-binding factor A.